Here is a 127-residue protein sequence, read N- to C-terminus: Small ribosomal subunit protein uS13 (127 aa).

Residues 92 to 127 are disordered; the sequence is HRMGLPVRGQRTRTNARTRRGVRRTVAGKKKASAKK. Residues 101 to 127 show a composition bias toward basic residues; the sequence is QRTRTNARTRRGVRRTVAGKKKASAKK.

It belongs to the universal ribosomal protein uS13 family. Part of the 30S ribosomal subunit. Forms a loose heterodimer with protein S19. Forms two bridges to the 50S subunit in the 70S ribosome.

Located at the top of the head of the 30S subunit, it contacts several helices of the 16S rRNA. In the 70S ribosome it contacts the 23S rRNA (bridge B1a) and protein L5 of the 50S subunit (bridge B1b), connecting the 2 subunits; these bridges are implicated in subunit movement. Contacts the tRNAs in the A and P-sites. The protein is Small ribosomal subunit protein uS13 of Trichodesmium erythraeum (strain IMS101).